We begin with the raw amino-acid sequence, 1174 residues long: Male determiner protein Mdmd(III) (1174 aa).

A compositionally biased stretch (basic and acidic residues) spans 1–15 (MNATDAESRKPENKP). Disordered regions lie at residues 1-51 (MNAT…SGQR), 80-109 (KDGS…HPVE), and 136-259 (KQLS…LRRS). The span at 16–35 (SSESSSSGSTSGSSDGEVSS) shows a compositional bias: low complexity. The span at 36–47 (KTYFKNNKSKVL) shows a compositional bias: polar residues. Positions 80–92 (KDGSNEMLPKEDS) are enriched in basic and acidic residues. The segment covering 93–102 (INTNHNYTTD) has biased composition (polar residues). Positions 138-153 (LSAYRSRSRSTRLSYS) are enriched in low complexity. The span at 167–180 (SRYKKSVLRNRRTS) shows a compositional bias: basic residues. Residues 183–200 (HGRDSSTTKRSVSRDKDN) are compositionally biased toward basic and acidic residues. Over residues 201–223 (RLRRRIGSSRSHTRSHSRFRRSE) the composition is skewed to basic residues. Residues 235-259 (RSQERRHERRRSMSSDYERIALRRS) are compositionally biased toward basic and acidic residues. Positions 348–531 (KKYIHGYINK…KVLFQVRRDG (184 aa)) constitute an MIF4G domain. Residues 641–757 (ALRRTIYLTL…SWDVLDCIKL (117 aa)) form the MI domain. A compositionally biased stretch (low complexity) spans 840 to 857 (SAPSSSSSSSLSSELSAP). Disordered stretches follow at residues 840–1045 (SAPS…SRTK) and 1096–1133 (KDNY…NHSR). The span at 869–909 (KKKHKGKNKKMTKKKNPSKKKEKTKKFVGKNKIAAKNKTIK) shows a compositional bias: basic residues. Residues 910 to 924 (RRTDKDNSSSKDNFL) are compositionally biased toward basic and acidic residues. A compositionally biased stretch (low complexity) spans 926–957 (SESSSNESISLDSLSSELFAPSSYSSSESSND). Basic residues predominate over residues 963-1001 (KHKGKNKKMTKKKNPSNKKEKTKKKLSKNKKAPNKNTKK). Residues 1010–1020 (SSESSISESKS) are compositionally biased toward low complexity. A compositionally biased stretch (basic residues) spans 1034–1045 (RKKRVTSKSRTK). The segment covering 1103–1118 (QNHEISQRHDSEIKRR) has biased composition (basic and acidic residues). The span at 1119–1130 (REERKKRHHEKN) shows a compositional bias: basic residues.

This sequence belongs to the CWC22 family. In terms of assembly, component of the spliceosome C complex.

The protein localises to the nucleus speckle. In terms of biological role, male determiner protein (M-factor) that controls male somatic sexual differentiation. Acts as a dominant factor that regulates the mRNA splicing of transformer (tra) and doublesex (dsx) transcripts and promotes expression of male splice forms of tra and dsx. Probably acts as a component of the spliceosome C complex required for mRNA splicing factor and exon-junction complex (EJC) assembly. Hinders eIF4AIII from non-specifically binding RNA and escorts it to the splicing machinery to promote EJC assembly on mature mRNAs. The polypeptide is Male determiner protein Mdmd(III) (Musca domestica (House fly)).